The sequence spans 620 residues: Notoamide biosynthesis transcriptional activator notL' (620 aa).

The tract at residues 1–26 (MPPSSKSRRLPPAASDSAASDAQKRR) is disordered. A DNA-binding region (zn(2)-C6 fungal-type) is located at residues 33-59 (CSACKARKLKCTGAPPCANCVKSRIEC). Residues 591–620 (ETGAFFLDPDQPSGNSTPIKSETPEGTAIS) form a disordered region.

It is found in the nucleus. Functionally, transcription factor that probably regulates the expression of the gene cluster that mediates the biosynthesis of notoamide, a fungal indole alkaloid that belongs to a family of natural products containing a characteristic bicyclo[2.2.2]diazaoctane core. The polypeptide is Notoamide biosynthesis transcriptional activator notL' (Aspergillus versicolor).